The sequence spans 182 residues: Peptide deformylase (182 aa).

Cys100 and His142 together coordinate Fe cation. Residue Glu143 is part of the active site. His146 provides a ligand contact to Fe cation.

The protein belongs to the polypeptide deformylase family. It depends on Fe(2+) as a cofactor.

The enzyme catalyses N-terminal N-formyl-L-methionyl-[peptide] + H2O = N-terminal L-methionyl-[peptide] + formate. Removes the formyl group from the N-terminal Met of newly synthesized proteins. Requires at least a dipeptide for an efficient rate of reaction. N-terminal L-methionine is a prerequisite for activity but the enzyme has broad specificity at other positions. This chain is Peptide deformylase, found in Bartonella bacilliformis (strain ATCC 35685 / KC583 / Herrer 020/F12,63).